Reading from the N-terminus, the 273-residue chain is NH(3)-dependent NAD(+) synthetase (273 aa).

Residue 47 to 54 (GISGGQDS) participates in ATP binding. Asp-53 is a binding site for Mg(2+). Arg-139 contributes to the deamido-NAD(+) binding site. Thr-159 lines the ATP pocket. Glu-164 provides a ligand contact to Mg(2+). 2 residues coordinate deamido-NAD(+): Lys-172 and Asp-179. Lys-188 and Thr-210 together coordinate ATP. Position 259-260 (259-260 (HK)) interacts with deamido-NAD(+).

This sequence belongs to the NAD synthetase family. As to quaternary structure, homodimer.

It catalyses the reaction deamido-NAD(+) + NH4(+) + ATP = AMP + diphosphate + NAD(+) + H(+). It functions in the pathway cofactor biosynthesis; NAD(+) biosynthesis; NAD(+) from deamido-NAD(+) (ammonia route): step 1/1. Catalyzes the ATP-dependent amidation of deamido-NAD to form NAD. Uses ammonia as a nitrogen source. The polypeptide is NH(3)-dependent NAD(+) synthetase (Staphylococcus aureus (strain N315)).